Reading from the N-terminus, the 392-residue chain is Probable tRNA sulfurtransferase (392 aa).

The 108-residue stretch at 61–168 folds into the THUMP domain; the sequence is DEALKLLSKV…EFTYIYSEII (108 aa). ATP-binding positions include 185 to 186, 210 to 211, arginine 267, glycine 289, and glutamine 298; these read LL and HF.

Belongs to the ThiI family.

The protein localises to the cytoplasm. It carries out the reaction [ThiI sulfur-carrier protein]-S-sulfanyl-L-cysteine + a uridine in tRNA + 2 reduced [2Fe-2S]-[ferredoxin] + ATP + H(+) = [ThiI sulfur-carrier protein]-L-cysteine + a 4-thiouridine in tRNA + 2 oxidized [2Fe-2S]-[ferredoxin] + AMP + diphosphate. The catalysed reaction is [ThiS sulfur-carrier protein]-C-terminal Gly-Gly-AMP + S-sulfanyl-L-cysteinyl-[cysteine desulfurase] + AH2 = [ThiS sulfur-carrier protein]-C-terminal-Gly-aminoethanethioate + L-cysteinyl-[cysteine desulfurase] + A + AMP + 2 H(+). The protein operates within cofactor biosynthesis; thiamine diphosphate biosynthesis. In terms of biological role, catalyzes the ATP-dependent transfer of a sulfur to tRNA to produce 4-thiouridine in position 8 of tRNAs, which functions as a near-UV photosensor. Also catalyzes the transfer of sulfur to the sulfur carrier protein ThiS, forming ThiS-thiocarboxylate. This is a step in the synthesis of thiazole, in the thiamine biosynthesis pathway. The sulfur is donated as persulfide by IscS. In Acetivibrio thermocellus (strain ATCC 27405 / DSM 1237 / JCM 9322 / NBRC 103400 / NCIMB 10682 / NRRL B-4536 / VPI 7372) (Clostridium thermocellum), this protein is Probable tRNA sulfurtransferase.